A 661-amino-acid chain; its full sequence is MASVGKPSLEDARRGTGSPKMKARENAKDTLCRNVTIYGRCRYEDKGCAFNHDPHKNSNQSDNASKKRFNVDSPSFTPSLLPSNGSSPTSSSSSLKKSSTISPKAANAAPFQPRTAASRSNTSTPGVRQDAVAPDWSVAEAQEFIPQGFDPTHMSPLHGNGNPGVASANAFDPFVSTPNPLAAPGAVGPVQANPFSHDAAAATLGGAYYANQAGFQQPVQYHLYAPIGPHNQNALAYQRNVHDLFLPNDFREELQKKAAATLQTLPNTQLPAQVDYFHSLVPLDLNHQKNAAIFGYPSWVYKAQSTKDGSYYALRRLEGFRLTNEKAIRSVQAWKRIASGSMVTIHDAFTSRSFQDSSLIFVTDYHPLSKTLAEQHLSAGGPRFQARHNAHVPEQILWGYITQIANALKCIHSAGLAARIIDPSKILLTGRNRIRLNACAIMDVVQYDAQRSVADLQRQDLVNFGQLILTLGANQPNVIHNPSKAMEHFTRAYSPQLKNTVMWLLGGMQKDQERNIDILINGISSQLMSTFDSALHLDDQLTSDLGRELENGRLVRLLTKLNFINERPEHEHDRQWSENGERFYLKIFRDYVFHQVDASGDPVVDLGHVLTCLNKLDAGTDERITLVSRDEQTCFVVSYKELKKGLESSFQALLRPSRRPH.

Disordered regions lie at residues 1–29 and 53–131; these read MASV…NAKD and DPHK…RQDA. The segment at 26-55 adopts a C3H1-type zinc-finger fold; sequence NAKDTLCRNVTIYGRCRYEDKGCAFNHDPH. Positions 63–83 match the PABPC-interacting motif-2 (PAM-2) motif; the sequence is NASKKRFNVDSPSFTPSLLPS. Positions 77–104 are enriched in low complexity; sequence TPSLLPSNGSSPTSSSSSLKKSSTISPK. Positions 115 to 126 are enriched in polar residues; that stretch reads TAASRSNTSTPG. The segment at 263–524 is pseudokinase domain; it reads QTLPNTQLPA…NIDILINGIS (262 aa). Residues Arg315, 364–371, and 424–425 contribute to the ATP site; these read DYHPLSKT and SK. The stretch at 525–563 forms a coiled coil; that stretch reads SQLMSTFDSALHLDDQLTSDLGRELENGRLVRLLTKLNF. The segment at 564–661 is knob domain; that stretch reads INERPEHEHD…ALLRPSRRPH (98 aa).

The protein belongs to the protein kinase superfamily. PAN3 family. In terms of assembly, homodimer. Forms a heterotrimer with a catalytic subunit pan2 to form the poly(a)-nuclease (PAN) deadenylation complex. Interacts (via PAM-2 motif) with poly(A)-binding protein pab1 (via PABC domain), conferring substrate specificity of the enzyme complex.

It is found in the cytoplasm. Functionally, regulatory subunit of the poly(A)-nuclease (PAN) deadenylation complex, one of two cytoplasmic mRNA deadenylases involved in mRNA turnover. PAN specifically shortens poly(A) tails of RNA and the activity is stimulated by poly(A)-binding protein pab1. PAN deadenylation is followed by rapid degradation of the shortened mRNA tails by the CCR4-NOT complex. Deadenylated mRNAs are then degraded by two alternative mechanisms, namely exosome-mediated 3'-5' exonucleolytic degradation, or deadenylation-dependent mRNA decaping and subsequent 5'-3' exonucleolytic degradation by XRN1. May also be involved in post-transcriptional maturation of mRNA poly(A) tails. pan3 acts as a positive regulator for PAN activity, recruiting the catalytic subunit pan2 to mRNA via its interaction with RNA and with pab1. The chain is PAN2-PAN3 deadenylation complex subunit pan3 from Emericella nidulans (strain FGSC A4 / ATCC 38163 / CBS 112.46 / NRRL 194 / M139) (Aspergillus nidulans).